Consider the following 293-residue polypeptide: Ribosomal protein L11 methyltransferase (293 aa).

S-adenosyl-L-methionine-binding residues include Thr145, Gly166, Asp188, and Asn230.

This sequence belongs to the methyltransferase superfamily. PrmA family.

It localises to the cytoplasm. The catalysed reaction is L-lysyl-[protein] + 3 S-adenosyl-L-methionine = N(6),N(6),N(6)-trimethyl-L-lysyl-[protein] + 3 S-adenosyl-L-homocysteine + 3 H(+). Its function is as follows. Methylates ribosomal protein L11. The sequence is that of Ribosomal protein L11 methyltransferase from Edwardsiella ictaluri (strain 93-146).